A 642-amino-acid chain; its full sequence is Threonine--tRNA ligase (642 aa).

The TGS domain occupies 1-61 (MPVITLPDGS…ENDAQLSIIT (61 aa)). The catalytic stretch occupies residues 243-534 (DHRKIGKQLD…LTEEFAGFFP (292 aa)). N6-acetyllysine is present on lysine 286. Positions 334, 385, and 511 each coordinate Zn(2+).

The protein belongs to the class-II aminoacyl-tRNA synthetase family. As to quaternary structure, homodimer. The cofactor is Zn(2+).

It is found in the cytoplasm. The enzyme catalyses tRNA(Thr) + L-threonine + ATP = L-threonyl-tRNA(Thr) + AMP + diphosphate + H(+). Functionally, catalyzes the attachment of threonine to tRNA(Thr) in a two-step reaction: L-threonine is first activated by ATP to form Thr-AMP and then transferred to the acceptor end of tRNA(Thr). Also edits incorrectly charged L-seryl-tRNA(Thr). The protein is Threonine--tRNA ligase of Escherichia coli O8 (strain IAI1).